Here is a 1368-residue protein sequence, read N- to C-terminus: Alpha-latrotoxin-Lg1a (1368 aa).

The tract at residues 217–236 (VLYAILYGTQTYVSVMFFLL) is helix H8 is the probable transmembrane region of the tetrameric pore inserted in the target cell membrane. Cys-392 and Cys-1044 form a disulfide bridge. ANK repeat units lie at residues 469 to 500 (QGRTVFHAAAKSGNDKIMIELTFFSKYTDINQ), 504 to 533 (KGYTPIHVAADSGNAGIVNLLIRSGISVNS), 538 to 568 (FLQTPLHLAAQRGFVATFQRLMESPEININE), 572 to 601 (DGFTPLHYAVRGGERILEAFINQAGIDVNV), 605 to 635 (KGLTPFHLAVIKNDWPVASTLLRSKKIDINA), 639 to 669 (NNMTALHYAAILGFLETTKQLINLKEINANA), 674 to 704 (GLLSALHYAILYKHDDVALFLLKSSKVNYNL), 708 to 737 (GDITPLHLAVMQGRKQVLSEMFNIGININQ), 741 to 770 (EKYTPLHLAAMSKYPELVEILLDQGSNLEA), 774 to 803 (TGATPLNLATFKGKSQAALILLKDEVNWRE), 807 to 837 (NGQMPIHGAAMNGLLDVAQAILYLDATVLDI), 841 to 870 (NLDTPLNLAAQNSHIDMVKYFIDLGAKVNT), 874 to 903 (KGQAPLLAFSKKGNLDMVKYLFDKNANVYI), 907 to 936 (DGLNFFYYAVRNGHLNIVKYAMSEKDKFEW), 953 to 981 (ISHFAVCDAVQYDKIEIVKYFVGTLGHYS), 982 to 1011 (ICSPLHQAARYGHIHIVKYLVEEEVLSVDG), 1013 to 1042 (KPDTPLCYASENGHLAVVQYLIRNGAKVNH), 1046 to 1075 (NGMTAIDKAITKNQLQVVQILAENGVDFRR), 1079 to 1109 (LDATPFLTAVASNSYEIAEYLIREKRQNINI), and 1115 to 1144 (NKETALHLAVYYKNLQMIKLLVKYGIDENI). The tract at residues 1174 to 1177 (KFRR) is furin-like endopeptidase recognition region. The propeptide occupies 1178-1368 (EYKSSNGEHD…GETLHLFHES (191 aa)).

This sequence belongs to the cationic peptide 01 (latrotoxin) family. 03 (alpha-latrotoxin) subfamily. Homotetramer in membranes. In terms of tissue distribution, expressed in venom gland, cephalothorax, and abdomen tissues from both males and females.

The protein localises to the secreted. Its subcellular location is the target cell membrane. In terms of biological role, presynaptic neurotoxin that causes massive release of neurotransmitters from vertebrate (but not invertebrate) nerve terminals and endocrine cells via a complex mechanism involving activation of receptor(s) and toxin insertion into the plasma membrane with subsequent pore formation. Binds to neurexin-1-alpha (NRXN1) in a calcium dependent manner, adhesion G protein-coupled receptor L1 (ADGRL1, also termed latrophilin-1 and calcium-independent receptor of latrotoxin (CIRL)), and receptor-type tyrosine-protein phosphatase S (PTPRS), also termed PTP sigma. NRXN1 and PTPRS are suggested to provide a platform for binding and subsequent pore formation events. In contrast, binding to ADGRL1 does not involve oligomerization and channel formation, but direct downstream stimulation of the synaptic fusion machinery. This is Alpha-latrotoxin-Lg1a from Latrodectus geometricus (Brown widow spider).